Consider the following 340-residue polypeptide: GTP 3',8-cyclase (340 aa).

The Radical SAM core domain maps to 8–227; the sequence is KLGRPIRDLR…DMIESHFDIE (220 aa). Residue Arg-17 coordinates GTP. The [4Fe-4S] cluster site is built by Cys-24 and Cys-28. Position 30 (Tyr-30) interacts with S-adenosyl-L-methionine. Residue Cys-31 participates in [4Fe-4S] cluster binding. Residue Arg-71 coordinates GTP. Residue Gly-75 participates in S-adenosyl-L-methionine binding. A GTP-binding site is contributed by Thr-102. Ser-126 serves as a coordination point for S-adenosyl-L-methionine. Lys-163 lines the GTP pocket. Position 197 (Met-197) interacts with S-adenosyl-L-methionine. 2 residues coordinate [4Fe-4S] cluster: Cys-261 and Cys-264. 266-268 provides a ligand contact to GTP; the sequence is RAR. Cys-278 provides a ligand contact to [4Fe-4S] cluster.

Belongs to the radical SAM superfamily. MoaA family. Monomer and homodimer. [4Fe-4S] cluster is required as a cofactor.

The enzyme catalyses GTP + AH2 + S-adenosyl-L-methionine = (8S)-3',8-cyclo-7,8-dihydroguanosine 5'-triphosphate + 5'-deoxyadenosine + L-methionine + A + H(+). Its pathway is cofactor biosynthesis; molybdopterin biosynthesis. Catalyzes the cyclization of GTP to (8S)-3',8-cyclo-7,8-dihydroguanosine 5'-triphosphate. The chain is GTP 3',8-cyclase from Staphylococcus haemolyticus (strain JCSC1435).